The primary structure comprises 156 residues: MAPKKDEKPATRAATQEAGVEATAKAEAKPKAEKAAKKAKKEPAKKAAKEPKGDGEKKDKKKKSAVETYKLYIYKVLKQVHPDTGISSKAMSIMNSFINDIFEKVATEASKLSRYNKKPTVTSREIQTAVRLVLPGELAKHAVSEGTKAVTKFTSG.

2 stretches are compositionally biased toward basic and acidic residues: residues 1–10 (MAPKKDEKPA) and 24–58 (AKAE…GEKK). Positions 1–63 (MAPKKDEKPA…DGEKKDKKKK (63 aa)) are disordered. N6-acetyllysine is present on residues Lys-40 and Lys-41. Lys-152 participates in a covalent cross-link: Glycyl lysine isopeptide (Lys-Gly) (interchain with G-Cter in ubiquitin).

Belongs to the histone H2B family. As to quaternary structure, the nucleosome is a histone octamer containing two molecules each of H2A, H2B, H3 and H4 assembled in one H3-H4 heterotetramer and two H2A-H2B heterodimers. The octamer wraps approximately 147 bp of DNA. Post-translationally, the N-terminus is blocked. Can be acetylated to form H2BK33ac and H2BK34ac. Acetylated mainly on the ubiquitinated form. In terms of processing, monoubiquitinated to form H2BK143ub1; which is increased during the light period and may give a specific tag for epigenetic transcriptional activation.

Its subcellular location is the nucleus. It is found in the chromosome. In terms of biological role, core component of nucleosome. Nucleosomes wrap and compact DNA into chromatin, limiting DNA accessibility to the cellular machineries which require DNA as a template. Histones thereby play a central role in transcription regulation, DNA repair, DNA replication and chromosomal stability. DNA accessibility is regulated via a complex set of post-translational modifications of histones, also called histone code, and nucleosome remodeling. The sequence is that of Histone H2B.2 from Chlamydomonas reinhardtii (Chlamydomonas smithii).